Reading from the N-terminus, the 517-residue chain is Superoxide-generating NADPH oxidase heavy chain subunit A (517 aa).

Residues methionine 1–lysine 19 are Cytoplasmic-facing. The chain crosses the membrane as a helical span at residues leucine 20–histidine 40. Over tyrosine 41–glutamine 62 the chain is Extracellular. Residues arginine 58–valine 201 enclose the Ferric oxidoreductase domain. The chain crosses the membrane as a helical span at residues leucine 63 to leucine 83. Residues arginine 84–asparagine 97 lie on the Cytoplasmic side of the membrane. A helical transmembrane segment spans residues isoleucine 98–alanine 118. Heme-binding residues include histidine 101 and histidine 115. The Extracellular segment spans residues histidine 119–lysine 149. A helical membrane pass occupies residues tyrosine 150–methionine 170. Over tyrosine 171–glutamate 184 the chain is Cytoplasmic. Residues glycine 185–leucine 205 traverse the membrane as a helical segment. Residues histidine 190 and histidine 203 each coordinate heme. A topological domain (extracellular) is located at residue histidine 206. The chain crosses the membrane as a helical span at residues serine 207–valine 227. The Cytoplasmic portion of the chain corresponds to glutamate 228–phenylalanine 517. The FAD-binding FR-type domain occupies arginine 229–glutamate 349. Histidine 283–serine 289 lines the FAD pocket.

As to quaternary structure, composed of a heavy chain and a light chain. Requires FAD as cofactor.

It is found in the membrane. Its function is as follows. Critical component of the membrane-bound oxidase that generates superoxide. It is the terminal component of a respiratory chain that transfers single electrons from cytoplasmic NADPH across the plasma membrane to molecular oxygen on the exterior. The sequence is that of Superoxide-generating NADPH oxidase heavy chain subunit A (noxA) from Dictyostelium discoideum (Social amoeba).